Reading from the N-terminus, the 288-residue chain is 4-diphosphocytidyl-2-C-methyl-D-erythritol kinase (288 aa).

Residue lysine 8 is part of the active site. 90–100 (PVGAGLAGGSS) serves as a coordination point for ATP. The active site involves aspartate 132.

It belongs to the GHMP kinase family. IspE subfamily.

The enzyme catalyses 4-CDP-2-C-methyl-D-erythritol + ATP = 4-CDP-2-C-methyl-D-erythritol 2-phosphate + ADP + H(+). It participates in isoprenoid biosynthesis; isopentenyl diphosphate biosynthesis via DXP pathway; isopentenyl diphosphate from 1-deoxy-D-xylulose 5-phosphate: step 3/6. Functionally, catalyzes the phosphorylation of the position 2 hydroxy group of 4-diphosphocytidyl-2C-methyl-D-erythritol. This is 4-diphosphocytidyl-2-C-methyl-D-erythritol kinase from Chlamydia trachomatis serovar A (strain ATCC VR-571B / DSM 19440 / HAR-13).